Reading from the N-terminus, the 388-residue chain is Succinate--CoA ligase [ADP-forming] subunit beta (388 aa).

Residues Lys46, 53-55 (GRG), Glu99, Cys102, and Glu107 contribute to the ATP site. The Mg(2+) site is built by Asn199 and Asp213. Substrate is bound by residues Asn264 and 321–323 (GIV).

Belongs to the succinate/malate CoA ligase beta subunit family. Heterotetramer of two alpha and two beta subunits. Requires Mg(2+) as cofactor.

The catalysed reaction is succinate + ATP + CoA = succinyl-CoA + ADP + phosphate. It carries out the reaction GTP + succinate + CoA = succinyl-CoA + GDP + phosphate. Its pathway is carbohydrate metabolism; tricarboxylic acid cycle; succinate from succinyl-CoA (ligase route): step 1/1. Its function is as follows. Succinyl-CoA synthetase functions in the citric acid cycle (TCA), coupling the hydrolysis of succinyl-CoA to the synthesis of either ATP or GTP and thus represents the only step of substrate-level phosphorylation in the TCA. The beta subunit provides nucleotide specificity of the enzyme and binds the substrate succinate, while the binding sites for coenzyme A and phosphate are found in the alpha subunit. This Actinobacillus pleuropneumoniae serotype 7 (strain AP76) protein is Succinate--CoA ligase [ADP-forming] subunit beta.